Reading from the N-terminus, the 520-residue chain is MNTADDNAKQRLQELIGPDYTLQWIVGHGGMSTVWLADDNVNDREVAVKVLRPEFSDNTEFLSRFRNEARAAENIHSEHVVTTYDYREVADPAGHTFCFIVLEYIRGESLADMLEREGALPEELALDVMEQAAHGLSVIHRMGLVHRDIKPGNMLITANGILKITDFGIAKAAASVPLTRTGMVVGTAQYVSPEQAQGHQVTPASDVYSLGVVGYEMLSGRRPFTGDSSVSVAIAHINEAPPQMPTSVSAQARELIGIALRKDPARRFADGNELARAVSAVRLGNRPPQPHSPAVQATAVAPSPSASTAMLGQVARPTTSVPASPTVLPERQEKRGSGVGLGLLIAAVIAAVIGGIIWAGATGVFSGDSEETTTPETITQTVTPTETTTSEEPTLAPPPVQPTRQPVPTPDETPTRLPTTTQESPTRVSPTPEETDEPGEQTTPGGQPPLSTLPTSLGWQNNQGGTGNQGNPNTTGNPANPGTPGTTGGNGTGNAGGNSPDAADELLMSLDELMNVGGNQ.

The 262-residue stretch at 20–281 (YTLQWIVGHG…NELARAVSAV (262 aa)) folds into the Protein kinase domain. ATP-binding positions include 26-34 (VGHGGMSTV) and lysine 49. Aspartate 148 acts as the Proton acceptor in catalysis. 2 disordered regions span residues 315 to 334 (ARPT…RQEK) and 366 to 504 (SGDS…DAAD). Residues 374–394 (TPETITQTVTPTETTTSEEPT) are compositionally biased toward low complexity. The span at 395 to 411 (LAPPPVQPTRQPVPTPD) shows a compositional bias: pro residues. A compositionally biased stretch (polar residues) spans 416–429 (RLPTTTQESPTRVS). Residues 440-449 (EQTTPGGQPP) are compositionally biased toward low complexity. The span at 450-460 (LSTLPTSLGWQ) shows a compositional bias: polar residues. The span at 469-484 (QGNPNTTGNPANPGTP) shows a compositional bias: low complexity. Residues 485 to 496 (GTTGGNGTGNAG) are compositionally biased toward gly residues.

This sequence belongs to the protein kinase superfamily. Ser/Thr protein kinase family.

It carries out the reaction L-seryl-[protein] + ATP = O-phospho-L-seryl-[protein] + ADP + H(+). It catalyses the reaction L-threonyl-[protein] + ATP = O-phospho-L-threonyl-[protein] + ADP + H(+). In Corynebacterium efficiens (strain DSM 44549 / YS-314 / AJ 12310 / JCM 11189 / NBRC 100395), this protein is Serine/threonine-protein kinases drp72.